The primary structure comprises 463 residues: Lactaldehyde dehydrogenase (463 aa).

Gly220–Gly225 contacts NAD(+). Catalysis depends on residues Glu240 and Cys274.

This sequence belongs to the aldehyde dehydrogenase family. In terms of assembly, homotetramer.

It catalyses the reaction (S)-lactaldehyde + NAD(+) + H2O = (S)-lactate + NADH + 2 H(+). It participates in cofactor biosynthesis; coenzyme F420 biosynthesis. Its function is as follows. Involved in F420 biosynthesis through the oxidation of lactaldehyde to lactate. The substrate preference order is propionaldehyde &gt; DL-lactaldehyde, DL-glyceraldehyde &gt; crotonaldehyde &gt; glycolaldehyde &gt; acetaldehyde, acrolein &gt; formaldehyde. No activity was observed towards methylglyoxal or glyceraldehyde-3-phosphate. Has a preference for NAD over NADP. This is Lactaldehyde dehydrogenase from Methanocaldococcus jannaschii (strain ATCC 43067 / DSM 2661 / JAL-1 / JCM 10045 / NBRC 100440) (Methanococcus jannaschii).